The sequence spans 71 residues: MAGMALARAWKQMSWFYYQYLLVTALYMLEPWERTVFNSMLVSVVGMALYTGYVFMPQHIMAILHYFEIVQ.

Residues 1–12 are Cytoplasmic-facing; sequence MAGMALARAWKQ. Residues 13–29 form a helical membrane-spanning segment; that stretch reads MSWFYYQYLLVTALYML. The Lumenal segment spans residues 30–34; the sequence is EPWER. A helical membrane pass occupies residues 35-57; sequence TVFNSMLVSVVGMALYTGYVFMP. The Cytoplasmic segment spans residues 58 to 71; it reads QHIMAILHYFEIVQ.

The protein belongs to the SPTSS family. SPTSSA subfamily. Component of the serine palmitoyltransferase (SPT) complex, which is composed of SPTLC1, SPTLC2 or SPTLC3 and SPTSSA or SPTSSB. The heterodimer consisting of SPTLC1 and SPTLC2/SPTLC3 forms the catalytic core of the enzyme, while SPTSSA or SPTSSB subunits determine substrate specificity. SPT also interacts with ORMDL proteins, especially ORMDL3, which negatively regulate SPT activity in the presence of ceramides. Interacts with MBOAT7; the interaction plays a role in MBOAT7 localization to mitochondria-associated membranes.

Its subcellular location is the endoplasmic reticulum membrane. It functions in the pathway lipid metabolism; sphingolipid metabolism. In terms of biological role, component of the serine palmitoyltransferase multisubunit enzyme (SPT) that catalyzes the initial and rate-limiting step in sphingolipid biosynthesis by condensing L-serine and activated acyl-CoA (most commonly palmitoyl-CoA) to form long-chain bases. The SPT complex is composed of SPTLC1, SPTLC2 or SPTLC3 and SPTSSA or SPTSSB. Within this complex, the heterodimer consisting of SPTLC1 and SPTLC2/SPTLC3 forms the catalytic core. Within the SPT complex, SPTSSA stimulates the catalytic activity and plays a role in substrate specificity, which depends upon the overall complex composition. The SPTLC1-SPTLC2-SPTSSA complex shows a strong preference for C16-CoA substrate, while the SPTLC1-SPTLC3-SPTSSA isozyme uses both C14-CoA and C16-CoA as substrates, with a slight preference for C14-CoA. Independently of its action as a SPT component, may be involved in MBOAT7 localization to mitochondria-associated membranes, a membrane bridge between the endoplasmic reticulum and mitochondria, may hence affect MBOAT7-catalyzed incorporation of arachidonic acid into phosphatidylinositol. The sequence is that of Serine palmitoyltransferase small subunit A from Mus musculus (Mouse).